Here is a 230-residue protein sequence, read N- to C-terminus: Ribonuclease 3 (230 aa).

The RNase III domain occupies 1–134 (MKQLEELLST…FLGALLLDKG (134 aa)). Residue Glu47 participates in Mg(2+) binding. Residue Asp51 is part of the active site. Asp120 and Glu123 together coordinate Mg(2+). Glu123 is a catalytic residue. The 70-residue stretch at 160–229 (DYKTCLQEFL…AKNALAQLSE (70 aa)) folds into the DRBM domain.

This sequence belongs to the ribonuclease III family. In terms of assembly, homodimer. Mg(2+) serves as cofactor.

Its subcellular location is the cytoplasm. It carries out the reaction Endonucleolytic cleavage to 5'-phosphomonoester.. In terms of biological role, digests double-stranded RNA. Involved in the processing of primary rRNA transcript to yield the immediate precursors to the large and small rRNAs (23S and 16S). Processes some mRNAs, and tRNAs when they are encoded in the rRNA operon. Processes pre-crRNA and tracrRNA of type II CRISPR loci if present in the organism. This is Ribonuclease 3 from Streptococcus pyogenes serotype M2 (strain MGAS10270).